Reading from the N-terminus, the 217-residue chain is MNKLIPLPREFFARDTNLVSTELIGKVLYFQGTTAIITETESYIGEDDPACHAARGRTKRTDVMFGPAGFSYVYLIYGMYYCLNFVTEDEGFPAATLIRGVYVISHNNVYTIDTAKIKSQITDEKTQSIIIRKNRRIMKFYIPNLKASNLYLNGPGKLCKYLGINTSYNKCDLINNKDFFVSDIGLNLPYYSTTRIGITKGTDKLWRYIVTDPKMLY.

Residues Ser-105 to Leu-145 enclose the RPE2 insert domain.

The protein belongs to the DNA glycosylase MPG family.

This chain is Putative 3-methyladenine DNA glycosylase, found in Rickettsia prowazekii (strain Madrid E).